The sequence spans 306 residues: Mycothiol acetyltransferase (306 aa).

N-acetyltransferase domains follow at residues 5 to 157 (EIYE…EPAA) and 159 to 306 (ITIR…HKKL). E36 lines the 1D-myo-inositol 2-(L-cysteinylamino)-2-deoxy-alpha-D-glucopyranoside pocket. Acetyl-CoA is bound at residue 82 to 84 (MLV). D186, K227, and E238 together coordinate 1D-myo-inositol 2-(L-cysteinylamino)-2-deoxy-alpha-D-glucopyranoside. 242-244 (LGV) contacts acetyl-CoA. Y276 is a 1D-myo-inositol 2-(L-cysteinylamino)-2-deoxy-alpha-D-glucopyranoside binding site. Acetyl-CoA is bound at residue 281–286 (NVRAVR).

Belongs to the acetyltransferase family. MshD subfamily. In terms of assembly, monomer.

The enzyme catalyses 1D-myo-inositol 2-(L-cysteinylamino)-2-deoxy-alpha-D-glucopyranoside + acetyl-CoA = mycothiol + CoA + H(+). In terms of biological role, catalyzes the transfer of acetyl from acetyl-CoA to desacetylmycothiol (Cys-GlcN-Ins) to form mycothiol. The protein is Mycothiol acetyltransferase of Stackebrandtia nassauensis (strain DSM 44728 / CIP 108903 / NRRL B-16338 / NBRC 102104 / LLR-40K-21).